The following is a 547-amino-acid chain: uncharacterized protein (547 aa).

Topologically, residues 1–21 (MVKKHQNSKMGNTNHFGHLKS) are extracellular. A helical membrane pass occupies residues 22–42 (FVGGNVVALGAGTPYLFSFYA). The Cytoplasmic segment spans residues 43–58 (PQLLSKCHIPVSASSK). Residues 59–79 (LSFSLTIGSSLMGILAGIVVD) form a helical membrane-spanning segment. Residues 80 to 83 (RSPK) lie on the Extracellular side of the membrane. Residues 84 to 104 (LSCLIGSMCVFIAYLILNLCY) traverse the membrane as a helical segment. The Cytoplasmic portion of the chain corresponds to 105 to 110 (KHEWSS). A helical transmembrane segment spans residues 111–131 (TFLISLSLVLIGYGSVSGFYA). Over 132–144 (SVKCANTNFPQHR) the chain is Extracellular. The helical transmembrane segment at 145-165 (GTAGAFPVSLYGLSGMVFSYL) threads the bilayer. The Cytoplasmic portion of the chain corresponds to 166-175 (CSKLFGENIE). Residues 176-196 (HVFIFLMVACGCMILVGYFSL) traverse the membrane as a helical segment. At 197 to 323 (DIFSNAEGDD…LKSSTFIGYY (127 aa)) the chain is on the extracellular side. Ser-237 is modified (phosphoserine). The disordered stretch occupies residues 275–300 (LLSPSSPHTKYDFEDENTSKNTVGEN). Residues 324 to 344 (IVLGILQGVGLMYIYSVGFMV) traverse the membrane as a helical segment. Residues 345 to 398 (QAQVSTPPLNQLPINAEKIQSLQVTLLSLLSFCGRLSSGPISDFLVKKFKAQRL) are Cytoplasmic-facing. A helical transmembrane segment spans residues 399-419 (WNIVIASLLVFLASNKISHDF). Over 420-437 (SSIEDPSLRASKSFKNIS) the chain is Extracellular. Residues 438-458 (VCSAIFGYSFGVLFGTFPSIV) traverse the membrane as a helical segment. Residues 459 to 469 (ADRFGTNGYST) are Cytoplasmic-facing. A helical transmembrane segment spans residues 470–490 (LWGVLTTGGVFSVSVFTDILG). At 491–514 (RDFKANTGDDDGNCKKGVLCYSYT) the chain is on the extracellular side. Residues 515–535 (FMVTKYCAAFNLLFVLGIIGY) traverse the membrane as a helical segment. At 536–547 (TYYRRRATANSL) the chain is on the cytoplasmic side.

Its subcellular location is the membrane. This is an uncharacterized protein from Saccharomyces cerevisiae (strain ATCC 204508 / S288c) (Baker's yeast).